A 301-amino-acid chain; its full sequence is Methionyl-tRNA formyltransferase (301 aa).

109–112 (SLLP) contacts (6S)-5,6,7,8-tetrahydrofolate.

This sequence belongs to the Fmt family.

The catalysed reaction is L-methionyl-tRNA(fMet) + (6R)-10-formyltetrahydrofolate = N-formyl-L-methionyl-tRNA(fMet) + (6S)-5,6,7,8-tetrahydrofolate + H(+). Attaches a formyl group to the free amino group of methionyl-tRNA(fMet). The formyl group appears to play a dual role in the initiator identity of N-formylmethionyl-tRNA by promoting its recognition by IF2 and preventing the misappropriation of this tRNA by the elongation apparatus. The chain is Methionyl-tRNA formyltransferase from Ruegeria pomeroyi (strain ATCC 700808 / DSM 15171 / DSS-3) (Silicibacter pomeroyi).